We begin with the raw amino-acid sequence, 404 residues long: Keratin, type I cuticular Ha3-I (404 aa).

Residues 1–56 are head; that stretch reads MSYSCGLPSLSCRTSCSSRPCVPPSCHGCTLPGACNIPANVSNCNWFCEGSFNGSE. Positions 56–367 constitute an IF rod domain; that stretch reads EKETMQFLND…SLLESEDCKL (312 aa). The interval 57–91 is coil 1A; that stretch reads KETMQFLNDRLASYLEKVRQLERDNAELENLIRER. The tract at residues 92–102 is linker 1; the sequence is SQQQEPLVCAS. Residues 103–203 are coil 1B; the sequence is YQSYFKTIEE…HEQEVNTLRC (101 aa). The linker 12 stretch occupies residues 204–219; the sequence is QLGDRLNVEVDAAPTV. The tract at residues 220–363 is coil 2; it reads DLNQVLNETR…NTYRSLLESE (144 aa). Residues 364–404 are tail; sequence DCKLPSNPCATTNACDKSTGPCISNPCGLRARCGPCNTFGY.

The protein belongs to the intermediate filament family. As to expression, expressed in the hair follicles.

The polypeptide is Keratin, type I cuticular Ha3-I (KRT33A) (Homo sapiens (Human)).